A 460-amino-acid polypeptide reads, in one-letter code: Vitamin K-dependent protein C (460 aa).

Residues 1-18 form the signal peptide; sequence MWQFRVFLLLMSTWGISS. The propeptide occupies 19 to 41; that stretch reads IPAHPDPVFSSSEHAHQVLRVRR. Positions 42–87 constitute a Gla domain; it reads ANSFLEEMRPGSLERECMEEICDFEEAQEIFQNVEDTLAFWIKYFD. 10 positions are modified to 4-carboxyglutamate: Glu47, Glu48, Glu55, Glu57, Glu60, Glu61, Glu66, Glu67, Glu70, and Glu76. A disulfide bridge connects residues Cys58 and Cys63. 9 cysteine pairs are disulfide-bonded: Cys91–Cys110, Cys100–Cys105, Cys104–Cys119, Cys121–Cys130, Cys139–Cys150, Cys146–Cys159, Cys161–Cys174, Cys182–Cys319, and Cys238–Cys254. 2 consecutive EGF-like domains span residues 96–131 and 135–175; these read LDHQCDSPCCGHGTCIDGIGSFSCSCDKGWEGKFCQ and RFQD…MRCK. Asp112 carries the post-translational modification (3R)-3-hydroxyaspartate. Residues 213-449 form the Peptidase S1 domain; sequence VNGTLTKQGD…YLKWIHSYIG (237 aa). Asn214 carries an N-linked (GlcNAc...) asparagine glycan. His253 acts as the Charge relay system in catalysis. An N-linked (GlcNAc...) asparagine glycan is attached at Asn290. Asp299 (charge relay system) is an active-site residue. Asn354 carries N-linked (GlcNAc...) asparagine glycosylation. 2 cysteine pairs are disulfide-bonded: Cys372–Cys386 and Cys397–Cys425. The Charge relay system role is filled by Ser401.

Belongs to the peptidase S1 family. Synthesized as a single chain precursor, which is cleaved into a light chain and a heavy chain held together by a disulfide bond. The enzyme is then activated by thrombin, which cleaves a tetradecapeptide from the amino end of the heavy chain; this reaction, which occurs at the surface of endothelial cells, is strongly promoted by thrombomodulin. The vitamin K-dependent, enzymatic carboxylation of some Glu residues allows the modified protein to bind calcium. Post-translationally, the iron and 2-oxoglutarate dependent 3-hydroxylation of aspartate and asparagine is (R) stereospecific within EGF domains. In terms of tissue distribution, plasma; synthesized in the liver.

Its subcellular location is the secreted. The protein resides in the golgi apparatus. It localises to the endoplasmic reticulum. The enzyme catalyses Degradation of blood coagulation factors Va and VIIIa.. In terms of biological role, protein C is a vitamin K-dependent serine protease that regulates blood coagulation by inactivating factors Va and VIIIa in the presence of calcium ions and phospholipids. Exerts a protective effect on the endothelial cell barrier function. The polypeptide is Vitamin K-dependent protein C (Proc) (Mus musculus (Mouse)).